The chain runs to 118 residues: V-type proton ATPase subunit G 2 (118 aa).

The tract at residues 23–90 is disordered; the sequence is ADARKRKARR…VQGMQSSQQR (68 aa). Over residues 35 to 55 the composition is skewed to basic and acidic residues; it reads QAKEEAQMEVEQYRREREQEF. Polar residues-rich tracts occupy residues 56-69 and 78-89; these read QSKQ…QGNL and RRQVQGMQSSQQ.

This sequence belongs to the V-ATPase G subunit family. In terms of assembly, V-ATPase is a heteromultimeric enzyme made up of two complexes: the ATP-hydrolytic V1 complex and the proton translocation V0 complex. The V1 complex consists of three catalytic AB heterodimers that form a heterohexamer, three peripheral stalks each consisting of EG heterodimers, one central rotor including subunits D and F, and the regulatory subunits C and H. The proton translocation complex V0 consists of the proton transport subunit a, a ring of proteolipid subunits c9c'', rotary subunit d, subunits e and f, and the accessory subunits ATP6AP1/Ac45 and ATP6AP2/PRR.

The protein localises to the melanosome. Its subcellular location is the cytoplasmic vesicle. The protein resides in the clathrin-coated vesicle membrane. Its function is as follows. Subunit of the V1 complex of vacuolar(H+)-ATPase (V-ATPase), a multisubunit enzyme composed of a peripheral complex (V1) that hydrolyzes ATP and a membrane integral complex (V0) that translocates protons. V-ATPase is responsible for acidifying and maintaining the pH of intracellular compartments and in some cell types, is targeted to the plasma membrane, where it is responsible for acidifying the extracellular environment. This is V-type proton ATPase subunit G 2 (ATP6V1G2) from Macaca mulatta (Rhesus macaque).